The following is a 102-amino-acid chain: NADH-quinone oxidoreductase subunit K (102 aa).

3 helical membrane passes run 5–25 (LAHY…GIFV), 30–50 (IIVI…NLVA), and 62–82 (IFAM…LAIL).

The protein belongs to the complex I subunit 4L family. As to quaternary structure, NDH-1 is composed of 14 different subunits. Subunits NuoA, H, J, K, L, M, N constitute the membrane sector of the complex.

It localises to the cell inner membrane. It catalyses the reaction a quinone + NADH + 5 H(+)(in) = a quinol + NAD(+) + 4 H(+)(out). NDH-1 shuttles electrons from NADH, via FMN and iron-sulfur (Fe-S) centers, to quinones in the respiratory chain. The immediate electron acceptor for the enzyme in this species is believed to be ubiquinone. Couples the redox reaction to proton translocation (for every two electrons transferred, four hydrogen ions are translocated across the cytoplasmic membrane), and thus conserves the redox energy in a proton gradient. The protein is NADH-quinone oxidoreductase subunit K of Phenylobacterium zucineum (strain HLK1).